The sequence spans 418 residues: DnaJ protein homolog 2 (418 aa).

Residues 11–76 (NTKYYEVLGV…REIYDQYGEE (66 aa)) form the J domain. The segment at 135–219 (GTSKKLSLSR…CKGEKVVQQK (85 aa)) adopts a CR-type zinc-finger fold. CXXCXGXG motif repeat units lie at residues 148–155 (CTKCKGKG), 164–171 (CASCQGSG), 191–198 (CNECKGTG), and 207–214 (CPQCKGEK). Residues 382–418 (VNIEEEMRRKQHQQAQEAYDEDDEGHGGAQRVQCAQQ) form a disordered region. Position 415 is a cysteine methyl ester (Cys415). Cys415 is lipidated: S-farnesyl cysteine. A propeptide spans 416-418 (AQQ) (removed in mature form).

Its subcellular location is the membrane. Functionally, plays a continuous role in plant development probably in the structural organization of compartments. The chain is DnaJ protein homolog 2 (LDJ2) from Allium porrum (Leek).